The chain runs to 985 residues: Regulator of telomere elongation helicase 1 homolog (985 aa).

The 297-residue stretch at 7–303 (AGIPVHFPFE…QDMAGDEPKD (297 aa)) folds into the Helicase ATP-binding domain. 42–49 (SPTGTGKT) contacts ATP. Positions 146, 164, 173, and 209 each coordinate [4Fe-4S] cluster. Residues 252–255 (DEAH) carry the DEAH box motif. Thr-874 is modified (phosphothreonine).

The protein belongs to the helicase family. RAD3/XPD subfamily.

The protein localises to the nucleus. It carries out the reaction ATP + H2O = ADP + phosphate + H(+). A probable ATP-dependent DNA helicase implicated in DNA repair and the maintenance of genomic stability. Acts as an anti-recombinase to counteract toxic recombination and limit crossover during meiosis. Regulates meiotic recombination and crossover homeostasis by physically dissociating strand invasion events and thereby promotes noncrossover repair by meiotic synthesis dependent strand annealing (SDSA) as well as disassembly of D loop recombination intermediates. The polypeptide is Regulator of telomere elongation helicase 1 homolog (Drosophila erecta (Fruit fly)).